Reading from the N-terminus, the 84-residue chain is Small ribosomal subunit protein bS16 (84 aa).

The protein belongs to the bacterial ribosomal protein bS16 family.

In Burkholderia multivorans (strain ATCC 17616 / 249), this protein is Small ribosomal subunit protein bS16.